Reading from the N-terminus, the 304-residue chain is Release factor glutamine methyltransferase (304 aa).

Residues D144 and N188 each coordinate S-adenosyl-L-methionine. N188–Y191 contacts substrate.

Belongs to the protein N5-glutamine methyltransferase family. PrmC subfamily.

The catalysed reaction is L-glutaminyl-[peptide chain release factor] + S-adenosyl-L-methionine = N(5)-methyl-L-glutaminyl-[peptide chain release factor] + S-adenosyl-L-homocysteine + H(+). Methylates the class 1 translation termination release factors RF1/PrfA and RF2/PrfB on the glutamine residue of the universally conserved GGQ motif. The sequence is that of Release factor glutamine methyltransferase from Mycobacterium tuberculosis (strain CDC 1551 / Oshkosh).